Here is a 258-residue protein sequence, read N- to C-terminus: E3 ubiquitin-protein ligase RNF170 (258 aa).

At 1–24 (MAKYQGEVQSLKLDDDSVIEGVSD) the chain is on the lumenal side. Residues 25-45 (QVLVAVVVSFALIATLVYALF) traverse the membrane as a helical segment. The Cytoplasmic segment spans residues 46–201 (RNVHQNIHPE…GGLFWMFRIR (156 aa)). The segment at 87-130 (CPICLHQASFPVETNCGHLFCGACIIAYWRYGSWLGAISCPICR) adopts an RING-type zinc-finger fold. The chain crosses the membrane as a helical span at residues 202–222 (IILCLMGAFFYLISPLDFVPE). Position 223 (Ala223) is a topological domain, lumenal. Residues 224–244 (LFGILGFLDDFFVIFLLLIYI) form a helical membrane-spanning segment. The Cytoplasmic portion of the chain corresponds to 245 to 258 (SIMYREVITQRLTR).

In terms of assembly, (Microbial infection) Interacts with human cytomegalovirus protein NEC2/UL50; this interaction promotes of UBA7 ubiquitination and subsequent proteasomal degradation. As to quaternary structure, constitutively associated with the ERLIN1/ERLIN 2 complex. Interacts with activated ITPR1. Expressed in the spinal cord.

It is found in the endoplasmic reticulum membrane. The enzyme catalyses S-ubiquitinyl-[E2 ubiquitin-conjugating enzyme]-L-cysteine + [acceptor protein]-L-lysine = [E2 ubiquitin-conjugating enzyme]-L-cysteine + N(6)-ubiquitinyl-[acceptor protein]-L-lysine.. It participates in protein modification; protein ubiquitination. In terms of biological role, E3 ubiquitin-protein ligase that plays an essential role in stimulus-induced inositol 1,4,5-trisphosphate receptor type 1 (ITPR1) ubiquitination and degradation via the endoplasmic reticulum-associated degradation (ERAD) pathway. Also involved in ITPR1 turnover in resting cells. Selectively inhibits the TLR3-triggered innate immune response by promoting the 'Lys-48'-linked polyubiquitination and degradation of TLR3. This chain is E3 ubiquitin-protein ligase RNF170 (RNF170), found in Homo sapiens (Human).